The sequence spans 66 residues: UPF0391 membrane protein AM1_5042 (66 aa).

The next 2 helical transmembrane spans lie at 4–24 (LTLT…SGIA) and 28–47 (AAIA…LVWP).

It belongs to the UPF0391 family.

It localises to the cell membrane. The chain is UPF0391 membrane protein AM1_5042 from Acaryochloris marina (strain MBIC 11017).